The following is a 769-amino-acid chain: 5-methyltetrahydropteroyltriglutamate--homocysteine methyltransferase (769 aa).

Residues 17 to 20 and K118 contribute to the 5-methyltetrahydropteroyltri-L-glutamate site; that span reads RELK. L-homocysteine contacts are provided by residues 441–443 and E494; that span reads IGS. L-methionine is bound by residues 441-443 and E494; that span reads IGS. Residues 525–526 and W571 each bind 5-methyltetrahydropteroyltri-L-glutamate; that span reads RC. Position 609 (D609) interacts with L-homocysteine. D609 contacts L-methionine. E615 contributes to the 5-methyltetrahydropteroyltri-L-glutamate binding site. 3 residues coordinate Zn(2+): H651, C653, and E675. H705 functions as the Proton donor in the catalytic mechanism. C737 contacts Zn(2+).

This sequence belongs to the vitamin-B12 independent methionine synthase family. Zn(2+) serves as cofactor.

It carries out the reaction 5-methyltetrahydropteroyltri-L-glutamate + L-homocysteine = tetrahydropteroyltri-L-glutamate + L-methionine. It functions in the pathway amino-acid biosynthesis; L-methionine biosynthesis via de novo pathway; L-methionine from L-homocysteine (MetE route): step 1/1. In terms of biological role, catalyzes the transfer of a methyl group from 5-methyltetrahydrofolate to homocysteine resulting in methionine formation. The sequence is that of 5-methyltetrahydropteroyltriglutamate--homocysteine methyltransferase from Blochmanniella floridana.